Consider the following 1001-residue polypeptide: ATP-dependent DNA/RNA helicase DHX36 (1001 aa).

Residues 1–44 (MSYDYHQSWSRDGGPRGSGQGSSGGGGGGSRGSGGGGGGRGGRG) form a required for recruitment to cytoplasmic stress granules region. Positions 1–54 (MSYDYHQSWSRDGGPRGSGQGSSGGGGGGSRGSGGGGGGRGGRGRHPAHLKGRE) are disordered. Positions 1–97 (MSYDYHQSWS…IVQLLNSVQA (97 aa)) are required for the pre-miR-134 transport. The segment at 1–193 (MSYDYHQSWS…KKTDPRYIEM (193 aa)) is necessary for nuclear and nucleolar caps localizations. The span at 15–41 (PRGSGQGSSGGGGGGSRGSGGGGGGRG) shows a compositional bias: gly residues. The segment at 46–68 (HPAHLKGREIGLWYAKKQTQKNK) is DSM (DHX36-specific motif). The segment at 46 to 98 (HPAHLKGREIGLWYAKKQTQKNKEAERQERAVVHMDERREEQIVQLLNSVQAK) is required for G4-DNA- and G4-RNA-binding. RecA-like domain stretches follow at residues 99–379 (TDKD…MIHI) and 380–621 (PGFT…DYQL). Residues 120–147 (EVSSEKKINSEKKLDNQEKKLLNQEKKT) adopt a coiled-coil conformation. S154 bears the Phosphoserine mark. The Helicase ATP-binding domain maps to 210 to 380 (VNLINNHQVT…FGNCPMIHIP (171 aa)). 226–231 (GCGKTT) provides a ligand contact to ATP. Positions 258–310 (RRISAISVAERVATERAESCGNGNSTGYQIRLQSRLPRKQGSILYCTTGIILQ) are necessary for interaction with single-stranded DNA at the 3'-end of the G4-DNA structure. A DEAH box motif is present at residues 327–330 (DEIH). Residues E328 and H330 each contribute to the Mg(2+) site. Positions 470–640 (ALIRYIVLEE…ELCLQIKILR (171 aa)) constitute a Helicase C-terminal domain. The interval 491-550 (WDNISTLHDLLMSQVMFKSDKFLIIPLHSLMPTVNQTQVFKKTPPGVRKIVIATNIAETS) is necessary for interaction with single-stranded DNA at the 3'-end of the G4-DNA structure. The Nuclear localization signal motif lies at 510–521 (DKFLIIPLHSLM). Residues S550 and 595–598 (RAGR) each bind ATP. Residues 622–691 (PEILRTPLEE…LGVHLARLPV (70 aa)) are WH domain. Necessary for interaction with single-stranded DNA at the 3'-end of the G4-DNA structure regions lie at residues 631-690 (ELCL…ARLP), 842-853 (NLGKKRKMVKVH), and 863-893 (HPKSVNVEQTDFHYNWLIYHLKMRTSSIYLY). Positions 834-898 (PKVAKIRLNL…SIYLYDCTEV (65 aa)) are OB-fold-like subdomains. K940 is modified (N6-acetyllysine). S956 carries the phosphoserine modification.

Belongs to the DEAD box helicase family. DEAH subfamily. Found in a multi-helicase-TICAM1 complex at least composed of DHX36, DDX1, DDX21 and TICAM1; this complex exists in resting cells with or without dsRNA poly(I:C) ligand stimulation. Interacts (via C-terminus) with TICAM1 (via TIR domain). Interacts (via C-terminus) with DDX21; this interaction serves as bridges to TICAM1. Interacts with TERT; this interaction is dependent on the ability of DHX36 to bind to the G-quadruplex RNA (G4-RNA) structure present in the telomerase RNA template component (TERC). Interacts with DKC1; this interaction is dependent on the ability of DHX36 to bind to the G4-RNA structure present in TERC. Interacts with PARN; this interaction stimulates PARN to enhance uPA mRNA decay. Interacts with EXOSC3; this interaction occurs in a RNase-insensitive manner. Interacts with EXOSC10; this interaction occurs in a RNase-insensitive manner. Interacts with ILF3; this interaction occurs in a RNA-dependent manner. Interacts with ELAVL1; this interaction occurs in an RNA-dependent manner. Interacts with DDX5; this interaction occurs in a RNA-dependent manner. Interacts with DDX17; this interaction occurs in a RNA-dependent manner. Interacts with HDAC1; this interaction occurs in a RNA-dependent manner. Interacts with HDAC3; this interaction occurs in a RNA-dependent manner. Interacts with HDAC4. Interacts with AGO1. Interacts with AGO2. Interacts with ERCC6. Requires Mg(2+) as cofactor. In terms of tissue distribution, expressed in spermatogonia stem cells and primary spermatocytes (at protein level). Expressed strongly in testis. Weakly expressed in heart, lung, liver, kidney, small intestine, spleen, lymphe node and thymus.

The protein localises to the nucleus. It localises to the cytoplasm. It is found in the cytosol. Its subcellular location is the stress granule. The protein resides in the nucleus speckle. The protein localises to the chromosome. It localises to the telomere. It is found in the mitochondrion. Its subcellular location is the perikaryon. The protein resides in the cell projection. The protein localises to the dendrite. It localises to the axon. The enzyme catalyses ATP + H2O = ADP + phosphate + H(+). ATPase activity is enhanced in the presence of homomeric poly(U) RNAs, but not by double-stranded DNA (dsDNA), double-stranded RNA (dsRNA) and tRNA. Functionally, multifunctional ATP-dependent helicase that unwinds G-quadruplex (G4) structures. Plays a role in many biological processes such as genomic integrity, gene expression regulations and as a sensor to initiate antiviral responses. G4 structures correspond to helical structures containing guanine tetrads. Binds with high affinity to and unwinds G4 structures that are formed in nucleic acids (G4-DNA and G4-RNA). Plays a role in genomic integrity. Converts the G4-RNA structure present in telomerase RNA template component (TREC) into a double-stranded RNA to promote P1 helix formation that acts as a template boundary ensuring accurate reverse transcription. Plays a role in transcriptional regulation. Resolves G4-DNA structures in promoters of genes, such as YY1, KIT/c-kit and ALPL and positively regulates their expression. Plays a role in post-transcriptional regulation. Unwinds a G4-RNA structure located in the 3'-UTR polyadenylation site of the pre-mRNA TP53 and stimulates TP53 pre-mRNA 3'-end processing in response to ultraviolet (UV)-induced DNA damage. Binds to the precursor-microRNA-134 (pre-miR-134) terminal loop and regulates its transport into the synapto-dendritic compartment. Involved in the pre-miR-134-dependent inhibition of target gene expression and the control of dendritic spine size. Plays a role in the regulation of cytoplasmic mRNA translation and mRNA stability. Binds to both G4-RNA structures and alternative non-quadruplex-forming sequence within the 3'-UTR of the PITX1 mRNA regulating negatively PITX1 protein expression. Binds to both G4-RNA structure in the 5'-UTR and AU-rich elements (AREs) localized in the 3'-UTR of NKX2-5 mRNA to either stimulate protein translation or induce mRNA decay in an ELAVL1-dependent manner, respectively. Also binds to ARE sequences present in several mRNAs mediating exosome-mediated 3'-5' mRNA degradation. Involved in cytoplasmic urokinase-type plasminogen activator (uPA) mRNA decay. Component of a multi-helicase-TICAM1 complex that acts as a cytoplasmic sensor of viral double-stranded RNA (dsRNA) and plays a role in the activation of a cascade of antiviral responses including the induction of pro-inflammatory cytokines via the adapter molecule TICAM1. Required for the early embryonic development and hematopoiesis. Involved in the regulation of cardioblast differentiation and proliferation during heart development. Involved in spermatogonia differentiation. May play a role in ossification. The chain is ATP-dependent DNA/RNA helicase DHX36 from Mus musculus (Mouse).